Here is a 156-residue protein sequence, read N- to C-terminus: LIM domain only protein 3 (156 aa).

LIM zinc-binding domains lie at 22 to 84 and 86 to 148; these read KGCA…LFGV and GNCA…GLMK.

In Xenopus laevis (African clawed frog), this protein is LIM domain only protein 3.